Consider the following 77-residue polypeptide: Large ribosomal subunit protein bL28 (77 aa).

This sequence belongs to the bacterial ribosomal protein bL28 family.

This Delftia acidovorans (strain DSM 14801 / SPH-1) protein is Large ribosomal subunit protein bL28.